A 313-amino-acid polypeptide reads, in one-letter code: UPF0761 membrane protein VV1_0885 (313 aa).

A run of 6 helical transmembrane segments spans residues 41 to 61 (YLAY…LSIL), 104 to 124 (MTAV…SNID), 139 to 159 (AVFS…LVGA), 185 to 205 (LLRW…YLLV), 215 to 235 (AVVG…GFAA), and 249 to 269 (ALAA…IVLI). A disordered region spans residues 294–313 (PNNDTELEKDTQRDRFDSES). Positions 299–313 (ELEKDTQRDRFDSES) are enriched in basic and acidic residues.

It belongs to the UPF0761 family.

It localises to the cell inner membrane. The sequence is that of UPF0761 membrane protein VV1_0885 from Vibrio vulnificus (strain CMCP6).